The sequence spans 1098 residues: Protein translocase subunit SecA (1098 aa).

ATP is bound by residues Gln-176, 194-198 (GEGKT), and Asp-696. Residues 1024 to 1098 (EPEQVREAAP…KYKNCHGQNA (75 aa)) form a disordered region. Composition is skewed to basic and acidic residues over residues 1041–1051 (QYREEKQDLSD) and 1058–1077 (AEHDTREVKREPVRAEKTVG). Residues Cys-1082, Cys-1084, Cys-1093, and His-1094 each contribute to the Zn(2+) site.

This sequence belongs to the SecA family. Monomer and homodimer. Part of the essential Sec protein translocation apparatus which comprises SecA, SecYEG and auxiliary proteins SecDF. Other proteins may also be involved. Zn(2+) is required as a cofactor.

The protein resides in the cell inner membrane. It localises to the cytoplasm. It catalyses the reaction ATP + H2O + cellular proteinSide 1 = ADP + phosphate + cellular proteinSide 2.. Its function is as follows. Part of the Sec protein translocase complex. Interacts with the SecYEG preprotein conducting channel. Has a central role in coupling the hydrolysis of ATP to the transfer of proteins into and across the cell membrane, serving as an ATP-driven molecular motor driving the stepwise translocation of polypeptide chains across the membrane. The polypeptide is Protein translocase subunit SecA (Phocaeicola vulgatus (strain ATCC 8482 / DSM 1447 / JCM 5826 / CCUG 4940 / NBRC 14291 / NCTC 11154) (Bacteroides vulgatus)).